Reading from the N-terminus, the 176-residue chain is Nucleoside triphosphate/diphosphate phosphatase (176 aa).

Catalysis depends on R23, which acts as the Proton donor. Residues N87, D103, D105, D107, D120, and E123 each contribute to the Mg(2+) site.

Belongs to the Ntdp family. It depends on Mg(2+) as a cofactor.

The enzyme catalyses a ribonucleoside 5'-triphosphate + H2O = a ribonucleoside 5'-diphosphate + phosphate + H(+). The catalysed reaction is a ribonucleoside 5'-diphosphate + H2O = a ribonucleoside 5'-phosphate + phosphate + H(+). Functionally, has nucleoside phosphatase activity towards nucleoside triphosphates and nucleoside diphosphates. The sequence is that of Nucleoside triphosphate/diphosphate phosphatase from Bacillus anthracis (strain A0248).